Reading from the N-terminus, the 172-residue chain is Large ribosomal subunit protein bL9 (172 aa).

Belongs to the bacterial ribosomal protein bL9 family.

In terms of biological role, binds to the 23S rRNA. The protein is Large ribosomal subunit protein bL9 of Chlamydia abortus (strain DSM 27085 / S26/3) (Chlamydophila abortus).